Here is a 297-residue protein sequence, read N- to C-terminus: Carboxysome assembly protein CcmO (297 aa).

The segment at 1–29 (MPTSPTMTSVPIARSPRPSYQQINQHQPS) is disordered. A compositionally biased stretch (polar residues) spans 18-29 (PSYQQINQHQPS). BMC domains lie at 32–116 (ALGL…AVFP) and 138–222 (SIGL…HTLP).

The protein belongs to the bacterial microcompartments protein family. Homooligomerizes, possibly as a trimer, interacts with CcmK in the carboxysome.

It is found in the carboxysome. In terms of biological role, required for formation of the carboxysome, a polyhedral inclusion where RuBisCO (ribulose bisphosphate carboxylase, rbcL-rbcS) is sequestered. Required for recruitment of major shell protein CcmK2 to the pre-carboxysome. Suggested to be a carboxysome shell protein. The chain is Carboxysome assembly protein CcmO from Synechocystis sp. (strain ATCC 27184 / PCC 6803 / Kazusa).